The sequence spans 270 residues: MVKVAVTGALGRMGSGIIKTITETDGLDVVAAIDIPNHPKKGLDIGELTGLGKIGVLLSTSDELEDVLKESGAEVLVDFTAAAPCVNTAKTASKLGVNLVIGTTGFTPEQRAEMEKAISENKVAATISQNYAVGVNIFFKTLELLAQKLGDYDIEILEMHHKFKKDAPSGTALRAAEIIQNNLNRDSNLIYGREGITGERTKEEICIHALRGGDIVGDHTVIFTTEGERLELSHRVTSRQSLVSGAIRAIQFVADKKEGIYNTFDVLDLN.

NAD(+) is bound by residues 8-13 (GALGRM), Asp-34, 102-104 (GTT), and 128-131 (SQNY). His-160 functions as the Proton donor/acceptor in the catalytic mechanism. His-161 is a (S)-2,3,4,5-tetrahydrodipicolinate binding site. Lys-164 acts as the Proton donor in catalysis. 170 to 171 (GT) is a binding site for (S)-2,3,4,5-tetrahydrodipicolinate.

The protein belongs to the DapB family.

The protein resides in the cytoplasm. The catalysed reaction is (S)-2,3,4,5-tetrahydrodipicolinate + NAD(+) + H2O = (2S,4S)-4-hydroxy-2,3,4,5-tetrahydrodipicolinate + NADH + H(+). It carries out the reaction (S)-2,3,4,5-tetrahydrodipicolinate + NADP(+) + H2O = (2S,4S)-4-hydroxy-2,3,4,5-tetrahydrodipicolinate + NADPH + H(+). Its pathway is amino-acid biosynthesis; L-lysine biosynthesis via DAP pathway; (S)-tetrahydrodipicolinate from L-aspartate: step 4/4. Its function is as follows. Catalyzes the conversion of 4-hydroxy-tetrahydrodipicolinate (HTPA) to tetrahydrodipicolinate. The chain is 4-hydroxy-tetrahydrodipicolinate reductase from Methanococcus maripaludis (strain C6 / ATCC BAA-1332).